A 124-amino-acid polypeptide reads, in one-letter code: Small ribosomal subunit protein bS6 (124 aa).

Belongs to the bacterial ribosomal protein bS6 family.

Binds together with bS18 to 16S ribosomal RNA. The sequence is that of Small ribosomal subunit protein bS6 from Chromobacterium violaceum (strain ATCC 12472 / DSM 30191 / JCM 1249 / CCUG 213 / NBRC 12614 / NCIMB 9131 / NCTC 9757 / MK).